The chain runs to 82 residues: Sec-independent protein translocase protein TatA (82 aa).

Residues 1-21 form a helical membrane-spanning segment; that stretch reads MGGISVWQLLIIAVIVVLLFG. The interval 41 to 82 is disordered; that stretch reads KAMSEDEPAKKDDKDADFEPKSLEEQQKKEAAPESKKDKEQA. The segment covering 42–82 has biased composition (basic and acidic residues); sequence AMSEDEPAKKDDKDADFEPKSLEEQQKKEAAPESKKDKEQA.

The protein belongs to the TatA/E family. The Tat system comprises two distinct complexes: a TatABC complex, containing multiple copies of TatA, TatB and TatC subunits, and a separate TatA complex, containing only TatA subunits. Substrates initially bind to the TatABC complex, which probably triggers association of the separate TatA complex to form the active translocon.

It localises to the cell inner membrane. Part of the twin-arginine translocation (Tat) system that transports large folded proteins containing a characteristic twin-arginine motif in their signal peptide across membranes. TatA could form the protein-conducting channel of the Tat system. The chain is Sec-independent protein translocase protein TatA from Vibrio campbellii (strain ATCC BAA-1116).